A 423-amino-acid chain; its full sequence is UDP-N-acetylglucosamine 1-carboxyvinyltransferase 1 (423 aa).

23-24 (KN) lines the phosphoenolpyruvate pocket. R96 is a binding site for UDP-N-acetyl-alpha-D-glucosamine. The active-site Proton donor is the C120. 2-(S-cysteinyl)pyruvic acid O-phosphothioketal is present on C120. UDP-N-acetyl-alpha-D-glucosamine-binding residues include D309 and V331.

It belongs to the EPSP synthase family. MurA subfamily.

It localises to the cytoplasm. It catalyses the reaction phosphoenolpyruvate + UDP-N-acetyl-alpha-D-glucosamine = UDP-N-acetyl-3-O-(1-carboxyvinyl)-alpha-D-glucosamine + phosphate. It functions in the pathway cell wall biogenesis; peptidoglycan biosynthesis. Its function is as follows. Cell wall formation. Adds enolpyruvyl to UDP-N-acetylglucosamine. The sequence is that of UDP-N-acetylglucosamine 1-carboxyvinyltransferase 1 from Streptococcus pyogenes serotype M1.